We begin with the raw amino-acid sequence, 110 residues long: Insulin (110 aa).

The first 24 residues, 1-24 (MALWMRLLPLLALLALWAPAPTRA), serve as a signal peptide directing secretion. Cystine bridges form between cysteine 31–cysteine 96, cysteine 43–cysteine 109, and cysteine 95–cysteine 100. A propeptide spans 57–87 (EVEDLQVRDVELAGAPGEGGLQPLALEGALQ) (c peptide).

It belongs to the insulin family. In terms of assembly, heterodimer of a B chain and an A chain linked by two disulfide bonds.

It is found in the secreted. In terms of biological role, insulin decreases blood glucose concentration. It increases cell permeability to monosaccharides, amino acids and fatty acids. It accelerates glycolysis, the pentose phosphate cycle, and glycogen synthesis in liver. This Canis lupus familiaris (Dog) protein is Insulin (INS).